A 238-amino-acid chain; its full sequence is Probable xyloglucan-specific endo-beta-1,4-glucanase A (238 aa).

Residues 1 to 18 (MKLSLSVALSLAAATAQA) form the signal peptide. 2 N-linked (GlcNAc...) asparagine glycosylation sites follow: Asn-106 and Asn-171.

It belongs to the glycosyl hydrolase 12 (cellulase H) family.

The protein localises to the secreted. It catalyses the reaction xyloglucan + H2O = xyloglucan oligosaccharides.. Functionally, catalyzes endohydrolysis of 1,4-beta-D-glucosidic linkages in xyloglucan with retention of the beta-configuration of the glycosyl residues. Specific for xyloglucan and does not hydrolyze other cell wall components. This is Probable xyloglucan-specific endo-beta-1,4-glucanase A (xgeA) from Aspergillus fumigatus (strain CBS 144.89 / FGSC A1163 / CEA10) (Neosartorya fumigata).